Reading from the N-terminus, the 530-residue chain is UDP-glucuronosyltransferase 1A8 (530 aa).

An N-terminal signal peptide occupies residues 1 to 25; that stretch reads MARTGWTSPIPLCVSLLLTCGFAEA. N-linked (GlcNAc...) asparagine glycans are attached at residues asparagine 71, asparagine 292, and asparagine 344. The chain crosses the membrane as a helical span at residues 488-504; sequence VIGFLLAVVLTVAFITF.

Belongs to the UDP-glycosyltransferase family. In terms of assembly, homodimer. Homooligomer. Interacts with UGT1A1, UGT1A3, UGT1A4, UGT1A6, UGT1A7, UGT1A9 and UGT1A10 to form heterodimers. Isoform 1 interacts with isoform 2/i2 suggesting that oligomerization is involved in negative regulation of transferase activity by isoform 2. Isoform 1 also interacts with respective i2 isoforms of UGT1A1, UGT1A3, UGT1A4, UGT1A6, UGT1A7, UGT1A9 and UGT1A10. In terms of tissue distribution, expressed in kidney, colon and small intestine. Not expressed in liver. Expressed in liver, kidney, colon and small intestine.

It is found in the endoplasmic reticulum membrane. It catalyses the reaction glucuronate acceptor + UDP-alpha-D-glucuronate = acceptor beta-D-glucuronoside + UDP + H(+). The catalysed reaction is 17beta-estradiol + UDP-alpha-D-glucuronate = 17beta-estradiol 3-O-(beta-D-glucuronate) + UDP + H(+). The enzyme catalyses 17alpha-estradiol + UDP-alpha-D-glucuronate = 17alpha-estradiol 3-O-(beta-D-glucuronate) + UDP + H(+). It carries out the reaction estrone + UDP-alpha-D-glucuronate = estrone 3-O-(beta-D-glucuronate) + UDP + H(+). It catalyses the reaction 16alpha,17alpha-estriol + UDP-alpha-D-glucuronate = 16alpha,17alpha-estriol 3-O-(beta-D-glucuronate) + UDP + H(+). The catalysed reaction is 2-hydroxy-17beta-estradiol + UDP-alpha-D-glucuronate = 2-hydroxy-17beta-estradiol 3-O-(beta-D-glucuronate) + UDP + H(+). The enzyme catalyses 2-hydroxy-17beta-estradiol + UDP-alpha-D-glucuronate = 17beta-estradiol 2-O-(beta-D-glucuronate) + UDP + H(+). It carries out the reaction 2-hydroxyestrone + UDP-alpha-D-glucuronate = 2-hydroxyestrone 3-O-(beta-D-glucuronate) + UDP + H(+). It catalyses the reaction 4-hydroxy-17beta-estradiol + UDP-alpha-D-glucuronate = 4-hydroxy-17beta-estradiol 3-O-(beta-D-glucuronate) + UDP + H(+). The catalysed reaction is 4-hydroxy-17beta-estradiol + UDP-alpha-D-glucuronate = 17beta-estradiol 4-O-(beta-D-glucuronate) + UDP + H(+). The enzyme catalyses 4-hydroxyestrone + UDP-alpha-D-glucuronate = 4-hydroxyestrone 3-O-(beta-D-glucuronate) + UDP + H(+). It carries out the reaction 4-hydroxyestrone + UDP-alpha-D-glucuronate = estrone 4-O-(beta-D-glucuronate) + UDP + H(+). It catalyses the reaction 2-methoxy-17beta-estradiol + UDP-alpha-D-glucuronate = 2-methoxy-17beta-estradiol 3-O-(beta-D-glucuronate) + UDP + H(+). The catalysed reaction is 2-methoxyestrone + UDP-alpha-D-glucuronate = 2-methoxyestrone 3-O-(beta-D-glucuronate) + UDP + H(+). The enzyme catalyses 4-methoxy-17beta-estradiol + UDP-alpha-D-glucuronate = 4-methoxy-17beta-estradiol 3-O-(beta-D-glucuronate) + UDP + H(+). It carries out the reaction 4-methoxyestrone + UDP-alpha-D-glucuronate = 4-methoxyestrone 3-O-(beta-D-glucuronate) + UDP + H(+). It catalyses the reaction 17beta-hydroxy-5alpha-androstan-3-one + UDP-alpha-D-glucuronate = 5alpha-dihydrotestosterone 17-O-(beta-D-glucuronate) + UDP + H(+). The catalysed reaction is 5alpha-dihydrotestosterone 17-O-(beta-D-glucuronate) + UDP-alpha-D-glucuronate = 5alpha-dihydrotestosterone 17-O-[beta-D-glucuronosyl-(1-&gt;2)-glucuronate] + UDP + H(+). The enzyme catalyses prunetin + UDP-alpha-D-glucuronate = prunetin-4'-O-beta-D-glucuronide + UDP. It carries out the reaction prunetin + UDP-alpha-D-glucuronate = prunetin-5-O-beta-D-glucuronide + UDP. It catalyses the reaction candesartan + UDP-alpha-D-glucuronate = candesartan O-beta-D-glucuronoside + UDP. The catalysed reaction is mycophenolate + UDP-alpha-D-glucuronate = mycophenolate 7-O-beta-D-glucuronide + UDP + H(+). The enzyme catalyses (E)-ferulate + UDP-alpha-D-glucuronate = (E)-4-O-(beta-D-glucuronosyl)-ferulate + UDP + H(+). It carries out the reaction (E)-ferulate + UDP-alpha-D-glucuronate = (E)-ferulic acid beta-D-glucuronate ester + UDP. Functionally, UDP-glucuronosyltransferase (UGT) that catalyzes phase II biotransformation reactions in which lipophilic substrates are conjugated with glucuronic acid to increase the metabolite's water solubility, thereby facilitating excretion into either the urine or bile. Essential for the elimination and detoxification of drugs, xenobiotics and endogenous compounds. Catalyzes the glucuronidation of endogenous steroid hormones such as androgens and estrogens. Produces dihydrotestosterone (DHT) diglucuronide from the DHT after two subsequent glucoronidation steps. Involved in the glucuronidation of the phytochemical ferulic acid at the phenolic or the carboxylic acid group. Also catalyzes the glucuronidation of the isoflavones genistein, daidzein, glycitein, formononetin, biochanin A and prunetin, which are phytoestrogens with anticancer and cardiovascular properties. Involved in the glucuronidation of the AGTR1 angiotensin receptor antagonist caderastan, a drug which can inhibit the effect of angiotensin II. Also metabolizes mycophenolate, an immunosuppressive agent. Lacks UGT glucuronidation activity but acts as a negative regulator of isoform 1. This is UDP-glucuronosyltransferase 1A8 from Homo sapiens (Human).